The primary structure comprises 394 residues: Elongation factor Tu 2 (394 aa).

The tr-type G domain maps to 10–204 (KPHVNVGTIG…ALDNYIPEPE (195 aa)). The interval 19–26 (GHVDHGKT) is G1. 19-26 (GHVDHGKT) is a binding site for GTP. Position 26 (Thr26) interacts with Mg(2+). Residues 60-64 (GITIS) form a G2 region. Positions 81–84 (DCPG) are G3. Residues 81–85 (DCPGH) and 136–139 (NKCD) each bind GTP. The segment at 136-139 (NKCD) is G4. Residues 174–176 (SAL) are G5.

The protein belongs to the TRAFAC class translation factor GTPase superfamily. Classic translation factor GTPase family. EF-Tu/EF-1A subfamily. Monomer.

It localises to the cytoplasm. The catalysed reaction is GTP + H2O = GDP + phosphate + H(+). GTP hydrolase that promotes the GTP-dependent binding of aminoacyl-tRNA to the A-site of ribosomes during protein biosynthesis. The sequence is that of Elongation factor Tu 2 from Photobacterium profundum (strain SS9).